The chain runs to 1378 residues: DNA-directed RNA polymerase subunit beta (1378 aa).

The protein belongs to the RNA polymerase beta chain family. The RNAP catalytic core consists of 2 alpha, 1 beta, 1 beta' and 1 omega subunit. When a sigma factor is associated with the core the holoenzyme is formed, which can initiate transcription.

It carries out the reaction RNA(n) + a ribonucleoside 5'-triphosphate = RNA(n+1) + diphosphate. Functionally, DNA-dependent RNA polymerase catalyzes the transcription of DNA into RNA using the four ribonucleoside triphosphates as substrates. In Roseobacter denitrificans (strain ATCC 33942 / OCh 114) (Erythrobacter sp. (strain OCh 114)), this protein is DNA-directed RNA polymerase subunit beta.